The primary structure comprises 256 residues: Thiazole synthase (256 aa).

The active-site Schiff-base intermediate with DXP is K95. 1-deoxy-D-xylulose 5-phosphate-binding positions include G156, 182-183 (AG), and 204-205 (NT).

The protein belongs to the ThiG family. As to quaternary structure, homotetramer. Forms heterodimers with either ThiH or ThiS.

The protein localises to the cytoplasm. The enzyme catalyses [ThiS sulfur-carrier protein]-C-terminal-Gly-aminoethanethioate + 2-iminoacetate + 1-deoxy-D-xylulose 5-phosphate = [ThiS sulfur-carrier protein]-C-terminal Gly-Gly + 2-[(2R,5Z)-2-carboxy-4-methylthiazol-5(2H)-ylidene]ethyl phosphate + 2 H2O + H(+). It participates in cofactor biosynthesis; thiamine diphosphate biosynthesis. Functionally, catalyzes the rearrangement of 1-deoxy-D-xylulose 5-phosphate (DXP) to produce the thiazole phosphate moiety of thiamine. Sulfur is provided by the thiocarboxylate moiety of the carrier protein ThiS. In vitro, sulfur can be provided by H(2)S. This Salmonella schwarzengrund (strain CVM19633) protein is Thiazole synthase.